Reading from the N-terminus, the 201-residue chain is Small ribosomal subunit protein uS4c (201 aa).

Positions 20–44 (GLTSKRPKAGSDLRNQSRSGKKSQY) are disordered. The S4 RNA-binding domain maps to 89–152 (MRLDNILFRL…NSRTLVQNLL (64 aa)).

It belongs to the universal ribosomal protein uS4 family. Part of the 30S ribosomal subunit. Contacts protein S5. The interaction surface between S4 and S5 is involved in control of translational fidelity.

It is found in the plastid. It localises to the chloroplast. One of the primary rRNA binding proteins, it binds directly to 16S rRNA where it nucleates assembly of the body of the 30S subunit. In terms of biological role, with S5 and S12 plays an important role in translational accuracy. The sequence is that of Small ribosomal subunit protein uS4c (rps4) from Barbarea verna (Land cress).